Consider the following 538-residue polypeptide: Importin subunit alpha-4 (538 aa).

Residues 1 to 58 form the IBB domain; it reads MSLRPSTRAELRKKIYKTGVDADEARRRREDNLVEIRKNKREDSLLKKRREGMMLQQQ. 8 ARM repeats span residues 112 to 152, 155 to 194, 197 to 237, 239 to 278, 281 to 320, 323 to 363, 366 to 405, and 409 to 448; these read SPPI…NVAS, SDHTRVVIEQGAVPIFVKLLTSASDDVREQAVWALGNVAG, PNCR…NFCR, KPPTPFEQVKPALPILRQLIYLNDEEVLTDACWALSYLSD, NDKIQAVIEAGVCPRLVELLGHQSPTVLIPALRTVGNIVT, DSQT…NITA, KLQIEAVVGAGIILPLVHLLQNAEFDIKKEAAWAISNATS, and HEQIQYLVTQGCIKPLCDLLICPDPRIVTVCLEGLENILK.

The protein belongs to the importin alpha family. Forms a complex with importin subunit beta-1. Interacts with A.tumefaciens VirD2 and VirE2.

It localises to the nucleus envelope. In terms of biological role, binds to conventional NLS motifs and mediates nuclear protein import across the nuclear envelope. Acts as a cellular receptor for the nuclear import of the virD2 protein of Agrobacterium and is essential for Agrobacterium-mediated root transformation. The sequence is that of Importin subunit alpha-4 from Arabidopsis thaliana (Mouse-ear cress).